The sequence spans 223 residues: Adenylate kinase 4, mitochondrial (223 aa).

Gly15 to Thr20 is an a ribonucleoside 5'-triphosphate binding site. Residues Ser35–Val64 are NMP. 2 residues coordinate AMP: Ser36 and Arg41. N6-succinyllysine is present on Lys60. Residues Leu62–Val64, Gly89–Arg92, and Gln96 contribute to the AMP site. Positions Arg125–Asp162 are LID. A ribonucleoside 5'-triphosphate contacts are provided by residues Arg126 and Val135–Tyr136. AMP is bound at residue Arg170. Lys175 carries the N6-acetyllysine modification. N6-acetyllysine; alternate occurs at positions 179 and 186. N6-succinyllysine; alternate is present on residues Lys179 and Lys186. Thr199 contributes to the a ribonucleoside 5'-triphosphate binding site.

The protein belongs to the adenylate kinase family. AK3 subfamily. In terms of assembly, monomer. Interacts with SLC25A5/ANT2. As to expression, expressed in the pyramidal cells in the hippocampus.

The protein localises to the mitochondrion matrix. The enzyme catalyses a ribonucleoside 5'-phosphate + ATP = a ribonucleoside 5'-diphosphate + ADP. It catalyses the reaction AMP + ATP = 2 ADP. It carries out the reaction GTP + AMP = GDP + ADP. The catalysed reaction is CMP + ATP = CDP + ADP. The enzyme catalyses GTP + CMP = CDP + GDP. It catalyses the reaction dAMP + ATP = dADP + ADP. It carries out the reaction dCMP + ATP = dCDP + ADP. The catalysed reaction is a 2'-deoxyribonucleoside 5'-diphosphate + ATP = a 2'-deoxyribonucleoside 5'-triphosphate + ADP. The enzyme catalyses a ribonucleoside 5'-diphosphate + ATP = a ribonucleoside 5'-triphosphate + ADP. It catalyses the reaction GDP + ATP = GTP + ADP. It carries out the reaction CDP + GTP = CTP + GDP. The catalysed reaction is CDP + ATP = CTP + ADP. The enzyme catalyses UDP + ATP = UTP + ADP. It catalyses the reaction GTP + UDP = UTP + GDP. It carries out the reaction dADP + GTP = dATP + GDP. The catalysed reaction is dCDP + GTP = dCTP + GDP. The enzyme catalyses dCDP + ATP = dCTP + ADP. It catalyses the reaction dGDP + ATP = dGTP + ADP. It carries out the reaction dTDP + GTP = dTTP + GDP. The catalysed reaction is dTDP + ATP = dTTP + ADP. Functionally, broad-specificity mitochondrial nucleoside phosphate kinase involved in cellular nucleotide homeostasis by catalyzing nucleoside-phosphate interconversions. Similar to other adenylate kinases, preferentially catalyzes the phosphorylation of the nucleoside monophosphate AMP with ATP as phosphate donor to produce ADP. Phosphorylates only AMP when using GTP as phosphate donor. In vitro, can also catalyze the phosphorylation of CMP, dAMP and dCMP and use GTP as an alternate phosphate donor. Moreover, exhibits a diphosphate kinase activity, producing ATP, CTP, GTP, UTP, TTP, dATP, dCTP and dGTP from the corresponding diphosphate substrates with either ATP or GTP as phosphate donors. Plays a role in controlling cellular ATP levels by regulating phosphorylation and activation of the energy sensor protein kinase AMPK. Plays a protective role in the cellular response to oxidative stress. This is Adenylate kinase 4, mitochondrial from Rattus norvegicus (Rat).